The chain runs to 240 residues: Small ribosomal subunit protein uS3 (240 aa).

The region spanning 39-109 (IRQYVEKNLS…QIRINVVEVA (71 aa)) is the KH type-2 domain. A disordered region spans residues 214 to 240 (EEQAPAQPATTPKRQRRRQQFEDRSNE).

Belongs to the universal ribosomal protein uS3 family. In terms of assembly, part of the 30S ribosomal subunit. Forms a tight complex with proteins S10 and S14.

Its function is as follows. Binds the lower part of the 30S subunit head. Binds mRNA in the 70S ribosome, positioning it for translation. This chain is Small ribosomal subunit protein uS3, found in Gloeothece citriformis (strain PCC 7424) (Cyanothece sp. (strain PCC 7424)).